The following is a 355-amino-acid chain: Peptide chain release factor 1 (355 aa).

The residue at position 233 (Gln233) is an N5-methylglutamine.

Belongs to the prokaryotic/mitochondrial release factor family. Methylated by PrmC. Methylation increases the termination efficiency of RF1.

The protein resides in the cytoplasm. Peptide chain release factor 1 directs the termination of translation in response to the peptide chain termination codons UAG and UAA. This Bacillus mycoides (strain KBAB4) (Bacillus weihenstephanensis) protein is Peptide chain release factor 1.